A 243-amino-acid polypeptide reads, in one-letter code: Orotidine 5'-phosphate decarboxylase (243 aa).

Substrate contacts are provided by residues Asp16, Lys38, Asp65–Thr74, Thr120, Arg181, Gln190, Gly210, and Arg211. Lys67 (proton donor) is an active-site residue.

It belongs to the OMP decarboxylase family. Type 1 subfamily. In terms of assembly, homodimer.

It catalyses the reaction orotidine 5'-phosphate + H(+) = UMP + CO2. Its pathway is pyrimidine metabolism; UMP biosynthesis via de novo pathway; UMP from orotate: step 2/2. In terms of biological role, catalyzes the decarboxylation of orotidine 5'-monophosphate (OMP) to uridine 5'-monophosphate (UMP). This chain is Orotidine 5'-phosphate decarboxylase, found in Bradyrhizobium sp. (strain ORS 278).